Reading from the N-terminus, the 1342-residue chain is DNA-directed RNA polymerase subunit beta (1342 aa).

Belongs to the RNA polymerase beta chain family. In terms of assembly, the RNAP catalytic core consists of 2 alpha, 1 beta, 1 beta' and 1 omega subunit. When a sigma factor is associated with the core the holoenzyme is formed, which can initiate transcription.

The enzyme catalyses RNA(n) + a ribonucleoside 5'-triphosphate = RNA(n+1) + diphosphate. Its function is as follows. DNA-dependent RNA polymerase catalyzes the transcription of DNA into RNA using the four ribonucleoside triphosphates as substrates. This chain is DNA-directed RNA polymerase subunit beta, found in Yersinia pestis bv. Antiqua (strain Angola).